Here is a 215-residue protein sequence, read N- to C-terminus: Large ribosomal subunit protein uL4 (215 aa).

Positions 43-97 (RRQGTHSTKTRAEVSGGGKKPWRQKGTGRARAGSTRSPIWVGGGKTHTPKPRDYS) are disordered.

This sequence belongs to the universal ribosomal protein uL4 family. Part of the 50S ribosomal subunit.

Its function is as follows. One of the primary rRNA binding proteins, this protein initially binds near the 5'-end of the 23S rRNA. It is important during the early stages of 50S assembly. It makes multiple contacts with different domains of the 23S rRNA in the assembled 50S subunit and ribosome. In terms of biological role, forms part of the polypeptide exit tunnel. The protein is Large ribosomal subunit protein uL4 of Brachyspira hyodysenteriae (strain ATCC 49526 / WA1).